The following is a 107-amino-acid chain: Integration host factor subunit beta (107 aa).

A disordered region spans residues 56–107; the sequence is RPSRVGRNPKSGEKVLVPEKHVPHFKPGKELRERVDRNAGEPLKADAADDDL. The segment covering 65–107 has biased composition (basic and acidic residues); sequence KSGEKVLVPEKHVPHFKPGKELRERVDRNAGEPLKADAADDDL.

It belongs to the bacterial histone-like protein family. Heterodimer of an alpha and a beta chain.

Functionally, this protein is one of the two subunits of integration host factor, a specific DNA-binding protein that functions in genetic recombination as well as in transcriptional and translational control. In Paraburkholderia phymatum (strain DSM 17167 / CIP 108236 / LMG 21445 / STM815) (Burkholderia phymatum), this protein is Integration host factor subunit beta.